The primary structure comprises 216 residues: Thiopurine S-methyltransferase (216 aa).

S-adenosyl-L-methionine contacts are provided by W11, L46, E67, and R122.

It belongs to the class I-like SAM-binding methyltransferase superfamily. TPMT family.

The protein localises to the cytoplasm. The catalysed reaction is S-adenosyl-L-methionine + a thiopurine = S-adenosyl-L-homocysteine + a thiopurine S-methylether.. In Vibrio campbellii (strain ATCC BAA-1116), this protein is Thiopurine S-methyltransferase.